A 772-amino-acid polypeptide reads, in one-letter code: Semaphorin-3A (772 aa).

A signal peptide spans 1 to 20 (MGWFTGIACLFWGVLLTARA). One can recognise a Sema domain in the interval 31-514 (RLKLSYKEML…STAGVAQLPL (484 aa)). N-linked (GlcNAc...) asparagine glycosylation occurs at N53. Cysteines 103 and 114 form a disulfide. N125 carries an N-linked (GlcNAc...) asparagine glycan. Intrachain disulfides connect C132/C141, C269/C381, C293/C341, and C517/C535. Residues 579–665 (PSLEERIIYG…GFMQTLLKVT (87 aa)) enclose the Ig-like C2-type domain. N591 carries an N-linked (GlcNAc...) asparagine glycan. Cysteines 650 and 723 form a disulfide. A compositionally biased stretch (basic residues) spans 729–738 (RDRKQRRQRP). A disordered region spans residues 729 to 772 (RDRKQRRQRPGHSQGSSNKWKHMQESKKGRNRRTHEFERAPRSV). The segment covering 750–772 (HMQESKKGRNRRTHEFERAPRSV) has biased composition (basic and acidic residues).

The protein belongs to the semaphorin family. Interacts with PXND1.

It is found in the secreted. Its function is as follows. Plays a role in growth cones guidance. May function to pattern sensory projections by selectively repelling axons that normally terminate dorsally. Involved in the development of the olfactory system and in neuronal control of puberty. The polypeptide is Semaphorin-3A (Sema3a) (Mus musculus (Mouse)).